A 680-amino-acid polypeptide reads, in one-letter code: Tumor protein 63 (680 aa).

Residues 1–107 (MNFETSRCAT…MQDSDLSDPM (107 aa)) form a transcription activation region. Polar residues predominate over residues 122–157 (QQIQNGSSSTSPYNTDHAQNSVTAPSPYAQPSSTFD). A disordered region spans residues 122 to 171 (QQIQNGSSSTSPYNTDHAQNSVTAPSPYAQPSSTFDALSPSPAIPSNTDY). Residues 170 to 362 (DYPGPHSFDV…KADEDSIRKQ (193 aa)) mediate DNA binding. 4 residues coordinate Zn(2+): C244, H247, C308, and C312. Basic and acidic residues predominate over residues 351-360 (DRKADEDSIR). 2 disordered regions span residues 351 to 393 (DRKA…IKKR) and 436 to 472 (RQQQ…MNSM). The tract at residues 352 to 388 (RKADEDSIRKQQVSDSAKNGDGTKRPFRQNTHGIQMT) is interaction with HIPK2. Polar residues predominate over residues 379–389 (RQNTHGIQMTS). The interval 394-443 (RSPDDELLYLPVRGRETYEMLLKIKESLELMQYLPQHTIETYRQQQQQQH) is oligomerization. The segment covering 437–463 (QQQQQQHQHLLQKQTSMQSQSSYGNSS) has biased composition (low complexity). The SAM domain maps to 541–607 (PPYPTDCSIV…WKGILDHRQL (67 aa)). Residues 610-680 (FSSPPHLLRT…KQQRIKEEGE (71 aa)) form a transactivation inhibition region. K676 is covalently cross-linked (Glycyl lysine isopeptide (Lys-Gly) (interchain with G-Cter in SUMO)).

The protein belongs to the p53 family. Binds DNA as a homotetramer. Isoform composition of the tetramer may determine transactivation activity. Interacts with HIPK2. Interacts with SSRP1, leading to stimulate coactivator activity. Interacts with WWP1. Interacts with PDS5A. Interacts (via activation domain) with NOC2L. Zn(2+) serves as cofactor. Post-translationally, may be sumoylated. Ubiquitinated. Polyubiquitination involves WWP1 and leads to proteasomal degradation of this protein. In terms of tissue distribution, widely expressed, notably in thymus, prostate, placenta, and skeletal muscle, although the precise isoform varies according to tissue type. Progenitor cell layers of skin, breast and prostate express high levels of DeltaN-type isoforms.

It localises to the nucleus. Its function is as follows. Acts as a sequence specific DNA binding transcriptional activator or repressor. The isoforms contain a varying set of transactivation and auto-regulating transactivation inhibiting domains thus showing an isoform specific activity. May be required in conjunction with TP73/p73 for initiation of p53/TP53 dependent apoptosis in response to genotoxic insults and the presence of activated oncogenes. Involved in Notch signaling by probably inducing JAG1 and JAG2. Activates RIPK4 transcription. Plays a role in the regulation of epithelial morphogenesis. The ratio of DeltaN-type and TA*-type isoforms may govern the maintenance of epithelial stem cell compartments and regulate the initiation of epithelial stratification from the undifferentiated embryonal ectoderm. Required for limb formation from the apical ectodermal ridge. Activates transcription of the p21 promoter. This chain is Tumor protein 63 (Tp63), found in Rattus norvegicus (Rat).